A 529-amino-acid polypeptide reads, in one-letter code: V-set and immunoglobulin domain-containing protein 10 (529 aa).

Positions 1–18 are cleaved as a signal peptide; sequence MMITSAVVLYLLLLSHQT. Ig-like C2-type domains lie at 19 to 110 and 129 to 217; these read VSEE…QTLS and PATF…QELL. Over 21-411 the chain is Extracellular; it reads EEQVQQFVIG…LNVKTSAGNG (391 aa). 13 N-linked (GlcNAc...) asparagine glycosylation sites follow: Asn-34, Asn-35, Asn-46, Asn-135, Asn-147, Asn-159, Asn-211, Asn-269, Asn-280, Asn-284, Asn-330, Asn-357, and Asn-376. Cys-40 and Cys-96 are oxidised to a cystine. A disulfide bond links Cys-150 and Cys-199. The Ig-like C2-type 3 domain occupies 317–403; sequence PTGQPLATAL…GARELEVYLN (87 aa). Cys-335 and Cys-387 are joined by a disulfide. Residues 412–432 traverse the membrane as a helical segment; sequence GAIVGIFVSVLVMMIGIVVGV. Over 433-529 the chain is Cytoplasmic; sequence TVYTKRDRIC…PQRAELQPAV (97 aa).

It localises to the membrane. The protein is V-set and immunoglobulin domain-containing protein 10 (vsig10) of Danio rerio (Zebrafish).